The sequence spans 529 residues: Bifunctional purine biosynthesis protein PurH (529 aa).

In terms of domain architecture, MGS-like spans 1–148 (MEQSFLPIRC…KNYKYVTVVV (148 aa)).

This sequence belongs to the PurH family.

It catalyses the reaction (6R)-10-formyltetrahydrofolate + 5-amino-1-(5-phospho-beta-D-ribosyl)imidazole-4-carboxamide = 5-formamido-1-(5-phospho-D-ribosyl)imidazole-4-carboxamide + (6S)-5,6,7,8-tetrahydrofolate. The catalysed reaction is IMP + H2O = 5-formamido-1-(5-phospho-D-ribosyl)imidazole-4-carboxamide. It participates in purine metabolism; IMP biosynthesis via de novo pathway; 5-formamido-1-(5-phospho-D-ribosyl)imidazole-4-carboxamide from 5-amino-1-(5-phospho-D-ribosyl)imidazole-4-carboxamide (10-formyl THF route): step 1/1. The protein operates within purine metabolism; IMP biosynthesis via de novo pathway; IMP from 5-formamido-1-(5-phospho-D-ribosyl)imidazole-4-carboxamide: step 1/1. This Wigglesworthia glossinidia brevipalpis protein is Bifunctional purine biosynthesis protein PurH.